A 147-amino-acid polypeptide reads, in one-letter code: Large-conductance mechanosensitive channel (147 aa).

The next 2 membrane-spanning stretches (helical) occupy residues Val14–Leu34 and Phe85–Ile105.

Belongs to the MscL family. Homopentamer.

The protein resides in the cell inner membrane. Functionally, channel that opens in response to stretch forces in the membrane lipid bilayer. May participate in the regulation of osmotic pressure changes within the cell. In Tolumonas auensis (strain DSM 9187 / NBRC 110442 / TA 4), this protein is Large-conductance mechanosensitive channel.